A 593-amino-acid polypeptide reads, in one-letter code: Cyclin-dependent kinase-like 3 (593 aa).

Residues 4-286 (YETLGKVGEG…STDLLHHDYF (283 aa)) enclose the Protein kinase domain. ATP-binding positions include 10–18 (VGEGSYGTV) and lysine 33. A [NKR]KIAxRE motif is present at residues 45 to 51 (KIATREI). Aspartate 125 functions as the Proton acceptor in the catalytic mechanism. Position 158 is a phosphothreonine (threonine 158). Position 160 is a phosphotyrosine (tyrosine 160). Over residues 368-403 (GKGDVPDLKKTESEGEHRQQGTAEDTHPTSLDRKPS) the composition is skewed to basic and acidic residues. Residues 368–512 (GKGDVPDLKK…NDQIASGNKR (145 aa)) are disordered. Low complexity predominate over residues 436-452 (NLTSSNLLAANPSSNLS). Composition is skewed to polar residues over residues 468-491 (SSQT…QVQT) and 499-508 (RTGQNDQIAS).

This sequence belongs to the protein kinase superfamily. CMGC Ser/Thr protein kinase family. CDC2/CDKX subfamily. Highly expressed in brain, and to a lower extent in heart and testis.

Its subcellular location is the nucleus. It localises to the cytoplasm. It carries out the reaction L-seryl-[protein] + ATP = O-phospho-L-seryl-[protein] + ADP + H(+). The enzyme catalyses L-threonyl-[protein] + ATP = O-phospho-L-threonyl-[protein] + ADP + H(+). The sequence is that of Cyclin-dependent kinase-like 3 from Rattus norvegicus (Rat).